A 396-amino-acid polypeptide reads, in one-letter code: Vitamin K-dependent protein Z (396 aa).

Residues 1-46 (AGSYLLEELFEGHLEKECWEEICVYEEAREVFEDDETTDEFWRTYM) enclose the Gla domain. 4-carboxyglutamate occurs at positions 7, 8, 11, 15, 17, 20, 21, 26, 27, 30, 33, 36, and 40. The cysteines at positions 18 and 23 are disulfide-linked. EGF-like domains lie at 47-83 (GGSPCASQPCLNNGSCQDSIRGYACTCAPGYEGPNCA) and 85-126 (AESE…RSCL). Disulfide bonds link Cys51/Cys62, Cys56/Cys71, Cys73/Cys82, Cys89/Cys101, Cys97/Cys110, Cys112/Cys125, and Cys169/Cys185. Residue Ser53 is glycosylated (O-linked (Glc...) serine). Asn59 carries an N-linked (GlcNAc...) asparagine glycan. Asp64 carries the (3R)-3-hydroxyaspartate modification. The 223-residue stretch at 135–357 (TLGPECCQRP…YALWLRQVTQ (223 aa)) folds into the Peptidase S1 domain. N-linked (GlcNAc...) asparagine glycans are attached at residues Asn191 and Asn289. A disulfide bridge links Cys284 with Cys298. A disordered region spans residues 356–396 (TQQPSRASPRGDRGQGRDGEPVPGDRGGRWAPTALPPGPLV). Positions 364–375 (PRGDRGQGRDGE) are enriched in basic and acidic residues. An O-linked (GalNAc...) threonine glycan is attached at Thr388.

The protein belongs to the peptidase S1 family. In terms of processing, the iron and 2-oxoglutarate dependent 3-hydroxylation of aspartate and asparagine is (R) stereospecific within EGF domains. In terms of tissue distribution, plasma.

The protein resides in the secreted. Its function is as follows. Inhibits activity of the coagulation protease factor Xa in the presence of SERPINA10, calcium and phospholipids. Appears to assist hemostasis by binding thrombin and promoting its association with phospholipid vesicles. The protein is Vitamin K-dependent protein Z (PROZ) of Bos taurus (Bovine).